Reading from the N-terminus, the 895-residue chain is Protein translocase subunit SecA (895 aa).

ATP contacts are provided by residues Q87, 105–109, and D512; that span reads GEGKT. Basic and acidic residues predominate over residues 833-852; it reads TQEEVEQAERQRQEMAKRET. Residues 833–895 form a disordered region; that stretch reads TQEEVEQAER…KHCHGSKAKY (63 aa). Positions 877, 879, 888, and 889 each coordinate Zn(2+). The span at 883–895 shows a compositional bias: basic residues; that stretch reads KKYKHCHGSKAKY.

It belongs to the SecA family. In terms of assembly, monomer and homodimer. Part of the essential Sec protein translocation apparatus which comprises SecA, SecYEG and auxiliary proteins SecDF-YajC and YidC. Zn(2+) serves as cofactor.

The protein localises to the cell inner membrane. Its subcellular location is the cytoplasm. The catalysed reaction is ATP + H2O + cellular proteinSide 1 = ADP + phosphate + cellular proteinSide 2.. Functionally, part of the Sec protein translocase complex. Interacts with the SecYEG preprotein conducting channel. Has a central role in coupling the hydrolysis of ATP to the transfer of proteins into and across the cell membrane, serving both as a receptor for the preprotein-SecB complex and as an ATP-driven molecular motor driving the stepwise translocation of polypeptide chains across the membrane. This is Protein translocase subunit SecA from Pasteurella multocida (strain Pm70).